The sequence spans 2136 residues: MADVTARSLQYEYKANSNLVLQADRSLIDRTRRDEPTGEVLSLVGKLEGTRMGDKAQRTKPQMQEERRAKRRKRDEDRHDMNKMKGYTLLSEGIDEMVGIIYKPKTKETRETYEVLLSFIQAALGDQPRDILCGAADEVLAVLKNEKLRDKERRREIDLLLGQTDDTRYHVLVNLGKKITDYGGDKEIQNMDDNIDETYGVNVQFESDEEEGDEDVYGEVREEASDDDMEGDEAVVRCTLSANLVASGELMSSKKKDLHPRDIDAFWLQRQLSRFYDDAIVSQKKADEVLEILKTASDDRECENQLVLLLGFNTFDFIKVLRQHRMMILYCTLLASAQSEPEKERIVGKMEADPELSKFLYQLHETEKEDLIREERSRRERVRQSRMDTDLETMDLDQGGEALAPRQVLDLEDLVFTQGSHFMANKRCQLPDGSFRRQRKGYEEVHVPALKPKPFGSEEQLLPVEKLPKYAQAGFEGFKTLNRIQSKLYRAALETDENLLLCAPTGAGKTNVALMCMLREIGKHINMDGTINVDDFKIIYIAPMRSLVQEMVGSFGKRLATYGITVAELTGDHQLCKEEISATQIIVCTPEKWDIITRKGGERTYTQLVRLIVLDEIHLLHDDRGPVLEALVARAIRNIEMTQEDVRLIGLSATLPNYEDVATFLRVDPAKGLFYFDNSFRPVPLEQTYVGITEKKAIKRFQIMNEIVYEKIMEHAGKNQVLVFVHSRKETGKTARAIRDMCLEKDTLGLFLREGSASTEVLRTEAEQCKNLELKDLLPYGFAIHHAGMTRVDRTLVEDLFADKHIQVLVSTATLAWGVNLPAHTVIIKGTQVYSPEKGRWTELGALDILQMLGRAGRPQYDTKGEGILITSHGELQYYLSLLNQQLPIESQMVSKLPDMLNAEIVLGNVQNAKDAVNWLGYAYLYIRMLRSPTLYGISHDDLKGDPLLDQRRLDLVHTAALMLDKNNLVKYDKKTGNFQVTELGRIASHYYITNDTVQTYNQLLKPTLSEIELFRVFSLSSEFKNITVREEEKLELQKLLERVPIPVKESIEEPSAKINVLLQAFISQLKLEGFALMADMVYVTQSAGRLMRAIFEIVLNRGWAQLTDKTLNLCKMIDKRMWQSMCPLRQFRKLPEEVVKKIEKKNFPFERLYDLNHNEIGELIRMPKMGKTIHKYVHLFPKLELSVHLQPITRSTLKVELTITPDFQWDEKVHGSSEAFWILVEDVDSEVILHHEYFLLKAKYAQDEHLITFFVPVFEPLPPQYFIRVVSDRWLSCETQLPVSFRHLILPEKYPPPTELLDLQPLPVSALRNSAFESLYQDKFPFFNPIQTQVFNTVYNSDDNVFVGAPTGSGKTICAEFAILRMLLQNSEGRCVYITPMEALAEQVYMDWYEKFQDRLNKKVVLLTGETSTDLKLLGKGNIIISTPEKWDILSRRWKQRKNVQNINLFVVDEVHLIGGENGPVLEVICSRMRYISSQIERPIRIVALSSSLSNAKDVAHWLGCSATSTFNFHPNVRPVPLELHIQGFNISHTQTRLLSMAKPVYHAITKHSPKKPVIVFVPSRKQTRLTAIDILTTCAADIQRQRFLHCTEKDLIPYLEKLSDSTLKETLLNGVGYLHEGLSPMERRLVEQLFSSGAIQVVVASRSLCWGMNVAAHLVIIMDTQYYNGKIHAYVDYPIYDVLQMVGHANRPLQDDEGRCVIMCQGSKKDFFKKFLYEPLPVESHLDHCMHDHFNAEIVTKTIENKQDAVDYLTWTFLYRRMTQNPNYYNLQGISHRHLSDHLSELVEQTLSDLEQSKCISIEDEMDVAPLNLGMIAAYYYINYTTIELFSMSLNAKTKVRGLIEIISNAAEYENIPIRHHEDNLLRQLAQKVPHKLNNPKFNDPHVKTNLLLQAHLSRMQLSAELQSDTEEILSKAIRLIQACVDVLSSNGWLSPALAAMELAQMVTQAMWSKDSYLKQLPHFTSEHIKRCTDKGVESVFDIMEMEDEERNALLQLTDSQIADVARFCNRYPNIELSYEVVDKDSIRSGGPVVVLVQLEREEEVTGPVIAPLFPQKREEGWWVVIGDAKSNSLISIKRLTLQQKAKVKLDFVAPATGGHNYTLYFMSDAYMGCDQEYKFSVDVKEAETDSDSD.

Phosphoserine occurs at positions 17 and 26. The segment at 39–81 (EVLSLVGKLEGTRMGDKAQRTKPQMQEERRAKRRKRDEDRHDM) is disordered. Residue Lys-46 forms a Glycyl lysine isopeptide (Lys-Gly) (interchain with G-Cter in SUMO2) linkage. Basic and acidic residues predominate over residues 48-81 (EGTRMGDKAQRTKPQMQEERRAKRRKRDEDRHDM). Residues 54–84 (DKAQRTKPQMQEERRAKRRKRDEDRHDMNKM) are a coiled coil. Ser-225 carries the post-translational modification Phosphoserine. Phosphothreonine is present on Thr-389. The interaction with C9orf78 and WBP4 stretch occupies residues 395–2129 (DLDQGGEALA…YKFSVDVKEA (1735 aa)). Positions 490-673 (RAALETDENL…FLRVDPAKGL (184 aa)) constitute a Helicase ATP-binding 1 domain. 503–510 (APTGAGKT) contributes to the ATP binding site. A DEAH box motif is present at residues 615–618 (DEIH). The Helicase C-terminal 1 domain occupies 684 to 921 (PLEQTYVGIT…NAKDAVNWLG (238 aa)). Phosphotyrosine is present on Tyr-709. A Glycyl lysine isopeptide (Lys-Gly) (interchain with G-Cter in SUMO) cross-link involves residue Lys-944. Lys-971 is modified (N6-acetyllysine; alternate). A Glycyl lysine isopeptide (Lys-Gly) (interchain with G-Cter in SUMO); alternate cross-link involves residue Lys-971. Residues 982–1286 (TELGRIASHY…SCETQLPVSF (305 aa)) enclose the SEC63 1 domain. Glycyl lysine isopeptide (Lys-Gly) (interchain with G-Cter in SUMO) cross-links involve residues Lys-1071 and Lys-1199. Residues 1282-2136 (LPVSFRHLIL…KEAETDSDSD (855 aa)) form an interaction with TSSC4 region. The 176-residue stretch at 1337-1512 (NTVYNSDDNV…WLGCSATSTF (176 aa)) folds into the Helicase ATP-binding 2 domain. 1350–1357 (APTGSGKT) contacts ATP. Position 1428 is a phosphothreonine (Thr-1428). Positions 1454-1457 (DEVH) match the DEAH box motif. A Helicase C-terminal 2 domain is found at 1545–1753 (PVYHAITKHS…TIENKQDAVD (209 aa)). The residue at position 1765 (Thr-1765) is a Phosphothreonine. The region spanning 1812 to 2124 (PLNLGMIAAY…GCDQEYKFSV (313 aa)) is the SEC63 2 domain. The residue at position 2002 (Ser-2002) is a Phosphoserine. A Glycyl lysine isopeptide (Lys-Gly) (interchain with G-Cter in SUMO) cross-link involves residue Lys-2091. Thr-2131 carries the post-translational modification Phosphothreonine. Ser-2133 and Ser-2135 each carry phosphoserine.

The protein belongs to the helicase family. SKI2 subfamily. Component of a core complex containing at least PRPF8, SNRNP200, EFTUD2 and SNRNP40. Component of the U5 snRNP and U4/U6-U5 tri-snRNP complexes, building blocks of the spliceosome. Component of the U4/U6-U5 tri-snRNP complex composed of the U4, U6 and U5 snRNAs and at least PRPF3, PRPF4, PRPF6, PRPF8, PRPF31, SNRNP200, TXNL4A, SNRNP40, DDX23, CD2BP2, PPIH, SNU13, EFTUD2, SART1 and USP39. Component of precatalytic, catalytic and postcatalytic spliceosomal complexes. Component of the minor spliceosome, which splices U12-type introns. Interacts with C9orf78; the interaction is direct and mutually exclusive with its interaction with WBP4. Interacts with WBP4; the interaction is mutually exclusive with its interaction with C9orf78. Interacts with PRPF8. Interacts with TSSC4; the interaction is direct, excludes recruitment of C9ORF78 and WBP4 to SNRNP200 and negatively regulates its RNA helicase activity.

The protein localises to the nucleus. The catalysed reaction is ATP + H2O = ADP + phosphate + H(+). Functionally, catalyzes the ATP-dependent unwinding of U4/U6 RNA duplices, an essential step in the assembly of a catalytically active spliceosome. Plays a role in pre-mRNA splicing as core component of precatalytic, catalytic and postcatalytic spliceosomal complexes. As a component of the minor spliceosome, involved in the splicing of U12-type introns in pre-mRNAs. Involved in spliceosome assembly, activation and disassembly. Mediates changes in the dynamic network of RNA-RNA interactions in the spliceosome. This Mus musculus (Mouse) protein is U5 small nuclear ribonucleoprotein 200 kDa helicase (Snrnp200).